We begin with the raw amino-acid sequence, 148 residues long: Probable histone H2B.1 (148 aa).

Residues 1–32 (MAPKGEKKPAEKKPAEEKKSTVAEKAPAEKKP) show a composition bias toward basic and acidic residues. Residues 1–57 (MAPKGEKKPAEKKPAEEKKSTVAEKAPAEKKPKAGKKLPKEGGSAAGEKKKKRSKKS) are disordered. 3 positions are modified to N6-acetyllysine: Lys7, Lys36, and Lys37. Lys144 is covalently cross-linked (Glycyl lysine isopeptide (Lys-Gly) (interchain with G-Cter in ubiquitin)).

The protein belongs to the histone H2B family. In terms of assembly, the nucleosome is a histone octamer containing two molecules each of H2A, H2B, H3 and H4 assembled in one H3-H4 heterotetramer and two H2A-H2B heterodimers. The octamer wraps approximately 147 bp of DNA. Can be acetylated to form H2BK6ac, H2BK33ac and H2BK34ac. In terms of processing, monoubiquitinated to form H2BK143ub1; may give a specific tag for epigenetic transcriptional activation.

The protein localises to the nucleus. The protein resides in the chromosome. Functionally, core component of nucleosome. Nucleosomes wrap and compact DNA into chromatin, limiting DNA accessibility to the cellular machineries which require DNA as a template. Histones thereby play a central role in transcription regulation, DNA repair, DNA replication and chromosomal stability. DNA accessibility is regulated via a complex set of post-translational modifications of histones, also called histone code, and nucleosome remodeling. This chain is Probable histone H2B.1, found in Medicago truncatula (Barrel medic).